Reading from the N-terminus, the 562-residue chain is MFS-type efflux pump elcC (562 aa).

Transmembrane regions (helical) follow at residues 50 to 70 (WVFL…GAAP), 80 to 100 (VVAG…VAEF), 111 to 131 (GMLG…GGAF), 139 to 159 (LCFY…FLLV), 184 to 204 (LYGL…TQWG), 215 to 235 (IIAL…IEIW), 257 to 277 (IFSF…PLWF), 288 to 308 (SGIH…AAGG), 309 to 329 (MVFG…LAAV), 351 to 371 (VLYG…IQAA), and 383 to 403 (VVIF…QNVF). Asparagine 448 is a glycosylation site (N-linked (GlcNAc...) asparagine). The chain crosses the membrane as a helical span at residues 455–475 (FYVAVATAGLSMAGSILIPWL). The segment at 515-562 (EIASEDSQSSDIEKVPRNNEVSTYDSQTSEVEKSSVGSTNRKVESIRN) is disordered. The span at 533-554 (NEVSTYDSQTSEVEKSSVGSTN) shows a compositional bias: polar residues.

This sequence belongs to the major facilitator superfamily. TCR/Tet family.

The protein resides in the cell membrane. Functionally, MFS-type efflux pump; part of the gene cluster that mediates the biosynthesis of elsinochrome C, a perelyenequinone phytotoxin structurally similar to cercosporin. The protein is MFS-type efflux pump elcC of Phaeosphaeria nodorum (strain SN15 / ATCC MYA-4574 / FGSC 10173) (Glume blotch fungus).